The sequence spans 373 residues: Carboxylesterase/phospholipase LipF (373 aa).

The short motif at 116 to 118 (HGG) is the Involved in the stabilization of the negatively charged intermediate by the formation of the oxyanion hole element. Active-site residues include Ser-186, Glu-285, and His-315.

This sequence belongs to the 'GDXG' lipolytic enzyme family.

The enzyme catalyses a carboxylic ester + H2O = an alcohol + a carboxylate + H(+). It carries out the reaction a 1,2-diacyl-sn-glycero-3-phosphocholine + H2O = phosphocholine + a 1,2-diacyl-sn-glycerol + H(+). A short-chain esterase and phospholipase. The polypeptide is Carboxylesterase/phospholipase LipF (Mycobacterium tuberculosis (strain CDC 1551 / Oshkosh)).